Consider the following 576-residue polypeptide: uncharacterized protein (576 aa).

The tract at residues 41–78 (EKESESKLNSKSTTLQSSDSEDWDSEENEDDITDVGVP) is disordered. Over residues 49 to 58 (NSKSTTLQSS) the composition is skewed to low complexity. Residues 59-73 (DSEDWDSEENEDDIT) are compositionally biased toward acidic residues. WD repeat units follow at residues 87–126 (GHSKIVTTTTFDKNGSRFYTGSLDNTIHCWDLNGLSATNP), 195–235 (GHIA…SQLE), 248–288 (LSRI…KRPV), 296–335 (LPQQGISCLSFSQDGNYLLSRGEDNALRVWDLRNSNKCVN), and 393–433 (TVTA…RGVK). Positions 547 to 576 (SETQPTPIYQGVTEGDISSEEGNPSKKQKR) are disordered.

This is an uncharacterized protein from Schizosaccharomyces pombe (strain 972 / ATCC 24843) (Fission yeast).